Here is a 311-residue protein sequence, read N- to C-terminus: p-hydroxybenzoic acid efflux pump subunit AaeA (311 aa).

The chain crosses the membrane as a helical span at residues 11–31; that stretch reads VGITVLVVVLAVIAIFNVWAF.

It belongs to the membrane fusion protein (MFP) (TC 8.A.1) family.

The protein localises to the cell inner membrane. Functionally, forms an efflux pump with AaeB. In Yersinia pseudotuberculosis serotype O:1b (strain IP 31758), this protein is p-hydroxybenzoic acid efflux pump subunit AaeA.